The following is a 574-amino-acid chain: MRTAYCGQLNLSHVGLEVTLCGWINKYRNFGGLIFIDLRDREGCIQVCFDVYQNKEVCISAAKLKQEFCIQLIGMVRARPKNQINSNISTGAVEVVAKKFSILNISDPLPLDISKNNIEENRLKYRYLDLRRSIMFDRIKTRSRIMSIVHRFMELEGFLNIETPMLTKVTPEGSRDYIVPSRLHAGKNYALPQSPQIFKQLLMVSGFDRYYQITKCFRDEDLRADRQPEFTQIDIETSFMTTQKIRELMEIFIRIIWREILNVELGVFSQFTYSEVMQRFGSDAPDLRNPIEMFDVSYLFNSTQNRLSFIRANNIGVQAIAMKVPNGRQLTQKQIDEYIYYSKQCGLKELLWVKVQFSDNDITKKEIQGSVTNFIDNLTLDIILNKTNIKSNDILFVGFNDNKNQFITKMLSALRLKLGNDLCLIKKDSWAPLWIIDFPMFKKNCHGEYTSMHHMFTSPKNCDVQMLKKDPLLVISEAYDMVINGCEIGSGSARIHSFDMQQAVFNILGITQNDQKKKFGYFMDALKYGAPPHAGLAFGLDRIAMLLTGSKNIREVIAFPKTTASVDIMANAPD.

L-aspartate is bound at residue glutamate 172. The tract at residues glutamine 196–lysine 199 is aspartate. Arginine 218 lines the L-aspartate pocket. Residues arginine 218–glutamate 220 and glutamine 227 contribute to the ATP site. An L-aspartate-binding site is contributed by histidine 453. Glutamate 487 contributes to the ATP binding site. An L-aspartate-binding site is contributed by arginine 494. Glycine 539–arginine 542 contacts ATP.

The protein belongs to the class-II aminoacyl-tRNA synthetase family. Type 1 subfamily. As to quaternary structure, homodimer.

It localises to the cytoplasm. The catalysed reaction is tRNA(Asp) + L-aspartate + ATP = L-aspartyl-tRNA(Asp) + AMP + diphosphate. Catalyzes the attachment of L-aspartate to tRNA(Asp) in a two-step reaction: L-aspartate is first activated by ATP to form Asp-AMP and then transferred to the acceptor end of tRNA(Asp). This is Aspartate--tRNA ligase from Blochmanniella pennsylvanica (strain BPEN).